Here is a 144-residue protein sequence, read N- to C-terminus: D-aminoacyl-tRNA deacylase (144 aa).

A Gly-cisPro motif, important for rejection of L-amino acids motif is present at residues 136–137; the sequence is GP.

It belongs to the DTD family. As to quaternary structure, homodimer.

It is found in the cytoplasm. The catalysed reaction is glycyl-tRNA(Ala) + H2O = tRNA(Ala) + glycine + H(+). It catalyses the reaction a D-aminoacyl-tRNA + H2O = a tRNA + a D-alpha-amino acid + H(+). In terms of biological role, an aminoacyl-tRNA editing enzyme that deacylates mischarged D-aminoacyl-tRNAs. Also deacylates mischarged glycyl-tRNA(Ala), protecting cells against glycine mischarging by AlaRS. Acts via tRNA-based rather than protein-based catalysis; rejects L-amino acids rather than detecting D-amino acids in the active site. By recycling D-aminoacyl-tRNA to D-amino acids and free tRNA molecules, this enzyme counteracts the toxicity associated with the formation of D-aminoacyl-tRNA entities in vivo and helps enforce protein L-homochirality. This chain is D-aminoacyl-tRNA deacylase, found in Pasteurella multocida (strain Pm70).